We begin with the raw amino-acid sequence, 38 residues long: Phospholipase A2 1 (38 aa).

Ca(2+) contacts are provided by Y28, G30, and G32.

This sequence belongs to the phospholipase A2 family. Group I subfamily. It depends on Ca(2+) as a cofactor. As to expression, expressed by the venom gland.

The protein localises to the secreted. The catalysed reaction is a 1,2-diacyl-sn-glycero-3-phosphocholine + H2O = a 1-acyl-sn-glycero-3-phosphocholine + a fatty acid + H(+). Functionally, snake venom phospholipase A2 (PLA2) that inhibits neuromuscular transmission by blocking acetylcholine release from the nerve termini. PLA2 catalyzes the calcium-dependent hydrolysis of the 2-acyl groups in 3-sn-phosphoglycerides. The protein is Phospholipase A2 1 of Calliophis bivirgatus (Blue Malaysian coral snake).